We begin with the raw amino-acid sequence, 198 residues long: Glycerol-3-phosphate acyltransferase (198 aa).

6 helical membrane-spanning segments follow: residues 1–21 (MNLLILFFGYLFGSFPSGYLA), 55–75 (VFLLDVFKGVLSILLAKYLLL), 79–99 (WQVAVGLSTLIGHIWPVWLNW), 111–131 (IFLGLSWQVGLATLGVFIIMI), 136–156 (IVSLASVSASLALPLIMFLSF), and 158–178 (GSNLSLPFLIVSLLAMILVIW).

Belongs to the PlsY family. In terms of assembly, probably interacts with PlsX.

Its subcellular location is the cell inner membrane. It catalyses the reaction an acyl phosphate + sn-glycerol 3-phosphate = a 1-acyl-sn-glycero-3-phosphate + phosphate. The protein operates within lipid metabolism; phospholipid metabolism. Catalyzes the transfer of an acyl group from acyl-phosphate (acyl-PO(4)) to glycerol-3-phosphate (G3P) to form lysophosphatidic acid (LPA). This enzyme utilizes acyl-phosphate as fatty acyl donor, but not acyl-CoA or acyl-ACP. The chain is Glycerol-3-phosphate acyltransferase from Prochlorococcus marinus (strain NATL2A).